We begin with the raw amino-acid sequence, 456 residues long: Na(+)/H(+) antiporter NhaA 3 (456 aa).

11 helical membrane-spanning segments follow: residues 32 to 52 (IEAT…TLSN), 87 to 107 (GLMT…VVLG), 114 to 134 (MVAL…GLYL), 145 to 165 (GWGV…ALLG), 174 to 194 (VFLL…VAVG), 202 to 222 (TALA…LLGV), 233 to 253 (AIIW…GVIL), 318 to 338 (WVAF…PITI), 347 to 367 (LAVM…FAWL), 382 to 402 (WGGL…ALFI), and 417 to 437 (LGIL…LCAL).

It belongs to the NhaA Na(+)/H(+) (TC 2.A.33) antiporter family.

The protein localises to the cell inner membrane. It carries out the reaction Na(+)(in) + 2 H(+)(out) = Na(+)(out) + 2 H(+)(in). Functionally, na(+)/H(+) antiporter that extrudes sodium in exchange for external protons. The chain is Na(+)/H(+) antiporter NhaA 3 from Acidiphilium cryptum (strain JF-5).